Consider the following 196-residue polypeptide: Adenylate kinase (196 aa).

An ATP-binding site is contributed by 9–17; the sequence is GIPGVGKST.

This sequence belongs to the archaeal adenylate kinase family.

The protein resides in the cytoplasm. The catalysed reaction is AMP + ATP = 2 ADP. This Pyrococcus horikoshii (strain ATCC 700860 / DSM 12428 / JCM 9974 / NBRC 100139 / OT-3) protein is Adenylate kinase (adkA).